Consider the following 154-residue polypeptide: Telokin (154 aa).

The segment at 1–24 (ISGMSGRKASGSSPTSPINANKVE) is disordered. Positions 10–19 (SGSSPTSPIN) are enriched in polar residues. The region spanning 42 to 133 (PYFTKTILDM…ATCTAELLVE (92 aa)) is the Ig-like C2-type domain. The segment at 134–154 (TMGKEGEGEGEGEEDEEEEEE) is disordered. A compositionally biased stretch (acidic residues) spans 141 to 154 (GEGEGEEDEEEEEE).

Belongs to the protein kinase superfamily. CAMK Ser/Thr protein kinase family. In terms of assembly, binds calmodulin.

Functionally, corresponds to the C-terminus of smooth muscle myosin light chain kinase. This Meleagris gallopavo (Wild turkey) protein is Telokin.